The following is a 99-amino-acid chain: Small ribosomal subunit protein bS6 (99 aa).

The protein belongs to the bacterial ribosomal protein bS6 family.

Binds together with bS18 to 16S ribosomal RNA. This is Small ribosomal subunit protein bS6 from Lactiplantibacillus plantarum (strain ATCC BAA-793 / NCIMB 8826 / WCFS1) (Lactobacillus plantarum).